We begin with the raw amino-acid sequence, 228 residues long: MTMGDKKSPTRPKRQAKPAADEGFWDCSVCTFRNSAEAFKCSICDVRKGTSTRKPRINSQLVAQQVAQQYATPPPPKKEKKEKVEKQDKEKPEKDKEISPSVTKKNTNKKTKPKSDILKDPPSEANSIQSANATTKTSETNHTSRPRLKNVDRSTAQQLAVTVGNVTVIITDFKEKTRSSSTSSSTVTSSAGSEQQNQSSSGSESTDKGSSRSSTPKGDMSAVNDESF.

3 disordered regions span residues 1 to 21 (MTMG…PAAD), 65 to 156 (QVAQ…RSTA), and 172 to 228 (DFKE…DESF). The segment at 21 to 50 (DEGFWDCSVCTFRNSAEAFKCSICDVRKGT) adopts a RanBP2-type zinc-finger fold. Basic and acidic residues predominate over residues 76 to 98 (PKKEKKEKVEKQDKEKPEKDKEI). Lys77 participates in a covalent cross-link: Glycyl lysine isopeptide (Lys-Gly) (interchain with G-Cter in SUMO2). The residue at position 99 (Ser99) is a Phosphoserine. Basic and acidic residues predominate over residues 113–122 (PKSDILKDPP). Phosphoserine occurs at positions 123, 127, and 130. A compositionally biased stretch (polar residues) spans 124 to 143 (EANSIQSANATTKTSETNHT). Residues 143 to 226 (TSRPRLKNVD…KGDMSAVNDE (84 aa)) are interaction with GABPB1 and FANK1. A compositionally biased stretch (low complexity) spans 179–204 (SSSTSSSTVTSSAGSEQQNQSSSGSE). Ser227 carries the post-translational modification Phosphoserine.

As to quaternary structure, monomer. Component of repressive BCOR complex containing Polycomb group subcomplex at least composed of BCOR, PCGF1, RING1 and RNF2/RING2. Component of PCR1-like complexes. Interacts with PCGF1. Part of a PCR1-like complex that contains AUTS2, PCGF5, RNF2, CSNK2B and RYBP. Interacts with RNF2; the interaction is direct. Interacts with CBX2, YAF2, RING1 and RNF2. Interacts with ubiquitin and ubiquitinated proteins. Interacts with ubiquitinated histone H2A. Interacts with apoptin, DEDD, FADD, CASP8, CASP10, YY1 and GABPB1. Together with GABPB1 and YY1, it forms a ternary complex, probably being the bridge factor between these two transcription factors. Interacts with MDM2, and thereby inhibits ubiquitination of TP53. Identified in a ternary complex containing MDM2, TP53 and RYBP. Interacts with FANK1; may prevent the ubiquitin-mediated proteasomal degradation of FANK1. Interacts with IFT57. Post-translationally, monoubiquitinated. Down-regulated in breast cancer tissues and in several breast cancer cell lines (at protein level). Widely expressed with highest levels in lymphoid tissues and placenta.

The protein localises to the nucleus. The protein resides in the cytoplasm. It is found in the nucleoplasm. In terms of biological role, component of a Polycomb group (PcG) multiprotein PRC1-like complex, a complex class required to maintain the transcriptionally repressive state of many genes, including Hox genes, throughout development. PcG PRC1-like complex acts via chromatin remodeling and modification of histones; it mediates monoubiquitination of histone H2A 'Lys-119', rendering chromatin heritably changed in its expressibility. Component of a PRC1-like complex that mediates monoubiquitination of histone H2A 'Lys-119' on the X chromosome and is required for normal silencing of one copy of the X chromosome in XX females. May stimulate ubiquitination of histone H2A 'Lys-119' by recruiting the complex to target sites. Inhibits ubiquitination and subsequent degradation of TP53, and thereby plays a role in regulating transcription of TP53 target genes. May also regulate the ubiquitin-mediated proteasomal degradation of other proteins like FANK1 to regulate apoptosis. May be implicated in the regulation of the transcription as a repressor of the transcriptional activity of E4TF1. May bind to DNA. May play a role in the repression of tumor growth and metastasis in breast cancer by down-regulating SRRM3. This is RING1 and YY1-binding protein (RYBP) from Homo sapiens (Human).